We begin with the raw amino-acid sequence, 206 residues long: Accelerated cell death 11 (206 aa).

Residues aspartate 60, lysine 64, arginine 99, arginine 103, and histidine 143 each contribute to the an N-acylsphingoid base 1-phosphate site.

It belongs to the GLTP family. Interacts with BPA1, PRA1F2 and PRA1F3.

Its subcellular location is the cytoplasm. Its function is as follows. Exhibits selective intermembrane transfer of ceramide-1-phosphate (C1P) and phytoceramide-1-phosphate. Does not transport ceramide (Cer) or GalCer, suggesting a requirement for phosphate in the headgroup for functionality. Transports in vitro sphingosine, but not glycosphingolipids. Also has some in vitro activity with sphingomyelin, a lipid not detected in plant tissues. The transport function may be not directly involved in regulating cell death. Rather, perturbations in the function of ACD11 or related components could be monitored by R-proteins, which then mediate defense and programmed cell death (PCD), as proposed in the guard hypothesis. C1P transfer is stimulated by phosphatidylserine in C1P source vesicles. Regulates autophagy, inflammasome mediated IL1B and IL18 processing, and pyroptosis, but not apoptosis. The polypeptide is Accelerated cell death 11 (Arabidopsis thaliana (Mouse-ear cress)).